Reading from the N-terminus, the 703-residue chain is Solute carrier family 28 member 3 (703 aa).

Basic and acidic residues predominate over residues 1–19 (MSRADPGKNSEPSESKMSL). The segment at 1–93 (MSRADPGKNS…DPEDDSEDEH (93 aa)) is disordered. Residues 1–117 (MSRADPGKNS…FCRKHRVVLR (117 aa)) are Cytoplasmic-facing. Polar residues predominate over residues 44–61 (QNTPGNSTVRNRVVQSGE). Positions 63 to 72 (GHAKQDDRQI) are enriched in basic and acidic residues. The helical transmembrane segment at 118 to 138 (STIWAVLLTGFLALVIAACAI) threads the bilayer. Residues 139-143 (NFHRA) are Extracellular-facing. The chain crosses the membrane as a helical span at residues 144 to 164 (LPLFVITLVTIFFVIWDHLMA). Over 165 to 188 (KYEQRIDDFLSPGRRLLDRHWFWL) the chain is Cytoplasmic. The helical transmembrane segment at 189–209 (KWVVWSSLILAIILWLSLDTA) threads the bilayer. Topologically, residues 210-212 (KLG) are extracellular. Residues 213 to 234 (QQNLVSFGGLIMYLILLFLFSK) form a helical membrane-spanning segment. The Cytoplasmic segment spans residues 235–242 (HPTRVYWR). A helical transmembrane segment spans residues 243–262 (PVFWGIGLQFLLGLLILRTR). Topologically, residues 263–299 (PGFVAFDWMGRQVQTFLGYTDTGARFVFGEKYTDHFF) are extracellular. Residues 300 to 320 (AFKILPIVVFFSTVMSMLYYL) traverse the membrane as a helical segment. Residues 321 to 344 (GLMQWIIRKVGWLMLVTMGSSPIE) lie on the Cytoplasmic side of the membrane. An intramembrane region (helical) is located at residues 345 to 363 (SVVAAGNIFIGQTESPLLV). The Cytoplasmic segment spans residues 364–376 (QPYLPHVTKSELH). The chain crosses the membrane as a helical span at residues 377–399 (TIMTAGFATIAGSVLGAYISFGV). The Extracellular portion of the chain corresponds to 400-401 (SS). The chain crosses the membrane as a helical span at residues 402–423 (THLLTASVMSAPAALAVAKLFW). The Cytoplasmic portion of the chain corresponds to 424-458 (PETEKPKITLKSAMKMENGDSRNLLEAASQGASSS). Residues 459–484 (IPLVANIAANLIAFLALLSFVNSALS) traverse the membrane as a helical segment. Over 485–522 (WFGSMFNYPELSFELICSYIFMPFSFMMGVDWQDSFMV) the chain is Extracellular. The segment at residues 523-542 (AKLIGYKTFFNEFVAYDHLS) is an intramembrane region (helical). Topologically, residues 543–581 (KLINLRKAAGPKFVNGVQQYMSIRSETIATYALCGFANF) are extracellular. Residues 582–592 (GSLGIVIGGLT) form a helical membrane-spanning segment. The Cytoplasmic portion of the chain corresponds to 593–605 (SIAPSRKRDIASG). Residues 606–628 (AMRALIAGTIACFMTACIAGILS) form a helical membrane-spanning segment. Residues 629-703 (DTPVDINCHH…LNCNWIPNKL (75 aa)) lie on the Extracellular side of the membrane.

The protein belongs to the concentrative nucleoside transporter (CNT) (TC 2.A.41) family. Homotrimer.

Its subcellular location is the cell membrane. It catalyses the reaction thymidine(out) + 2 Na(+)(out) = thymidine(in) + 2 Na(+)(in). It carries out the reaction cytidine(out) + 2 Na(+)(out) = cytidine(in) + 2 Na(+)(in). The catalysed reaction is uridine(out) + 2 Na(+)(out) = uridine(in) + 2 Na(+)(in). The enzyme catalyses adenosine(out) + 2 Na(+)(out) = adenosine(in) + 2 Na(+)(in). It catalyses the reaction guanosine(out) + 2 Na(+)(out) = guanosine(in) + 2 Na(+)(in). It carries out the reaction inosine(out) + 2 Na(+)(out) = inosine(in) + 2 Na(+)(in). In terms of biological role, sodium-dependent, pyrimidine- and purine-selective. Involved in the homeostasis of endogenous nucleosides. Exhibits the transport characteristics of the nucleoside transport system cib or N3 subtype (N3/cib) (with marked transport of both thymidine and inosine). Employs a 2:1 sodium/nucleoside ratio. Also able to transport gemcitabine, 3'-azido-3'-deoxythymidine (AZT), ribavirin and 3-deazauridine. In Mus musculus (Mouse), this protein is Solute carrier family 28 member 3 (Slc28a3).